The sequence spans 1729 residues: 182 kDa tankyrase-1-binding protein (1729 aa).

Residues 1 to 12 (MKVSTLRESSAM) are compositionally biased toward polar residues. Residues 1–151 (MKVSTLRESS…VRKAPAPFRP (151 aa)) form a disordered region. A Phosphoserine modification is found at Ser14. A compositionally biased stretch (low complexity) spans 46–63 (ALPAKPALPAKPSLLVPV). Over residues 117–127 (TGKEEAGKEEP) the composition is skewed to basic and acidic residues. Thr131 carries the post-translational modification Phosphothreonine. Ser178, Ser221, and Ser228 each carry phosphoserine. Disordered stretches follow at residues 184–450 (GSRL…LAAL), 484–603 (PSGL…ESPL), and 657–880 (ETTQ…SSRD). The tract at residues 210–1572 (DEDGSTLFRG…TEILDSAMYR (1363 aa)) is acidic. Basic and acidic residues predominate over residues 230–245 (AECREEHSKTPEERSL). Thr239 carries the phosphothreonine modification. A phosphoserine mark is found at Ser287 and Ser301. The span at 352-363 (PSPGLPAEGAPE) shows a compositional bias: low complexity. Pro residues predominate over residues 364–374 (APRPSSPPPEV). Phosphoserine is present on residues Ser429, Ser435, Ser437, Ser494, and Ser498. Composition is skewed to low complexity over residues 500–512 (ITEASEAAEAAEA), 524–541 (VSQQGQGAGSAPSGSGSS), and 572–583 (LPTTEGTPGLPL). Residue Thr501 is modified to Phosphothreonine. Residues Ser601, Ser672, Ser691, Ser695, Ser712, Ser724, Ser744, Ser762, and Ser806 each carry the phosphoserine modification. A compositionally biased stretch (polar residues) spans 738 to 753 (PQPSSFSPSSWCQGAS). Residues 803–812 (ASSSQDQSKV) show a composition bias toward polar residues. Thr833 carries the phosphothreonine modification. Phosphoserine occurs at positions 836, 851, 872, 877, 882, and 893. A compositionally biased stretch (basic and acidic residues) spans 858–872 (RDAELQDQEFGKRDS). Position 897 is a phosphotyrosine (Tyr897). The segment at 897 to 1083 (YASQDANEQG…ADLEDGEMGK (187 aa)) is disordered. A phosphoserine mark is found at Ser899, Ser920, Ser936, and Ser976. Thr979 carries the post-translational modification Phosphothreonine. 17 positions are modified to phosphoserine: Ser983, Ser987, Ser1004, Ser1008, Ser1013, Ser1024, Ser1029, Ser1054, Ser1073, Ser1091, Ser1103, Ser1133, Ser1138, Ser1158, Ser1178, Ser1248, and Ser1253. Over residues 1012-1021 (GSRDAGRPGE) the composition is skewed to basic and acidic residues. A compositionally biased stretch (polar residues) spans 1043 to 1054 (RDQSSWQNSDAS). The interval 1240–1302 (EVGEGGGHSQ…GAVCSPGESK (63 aa)) is disordered. The residue at position 1282 (Thr1282) is a Phosphothreonine. Phosphoserine occurs at positions 1297, 1328, 1331, 1383, and 1385. Residues 1362–1561 (AREHGVGGVS…SPSQDFSFIE (200 aa)) form a disordered region. The segment covering 1389–1400 (EARDPLEARELG) has biased composition (basic and acidic residues). A compositionally biased stretch (polar residues) spans 1406–1419 (GPETQGEDYSSSSL). A phosphoserine mark is found at Ser1435, Ser1439, Ser1450, Ser1452, Ser1473, Ser1476, Ser1503, and Ser1506. Residues 1450–1542 (SGSQGLLEEM…SDQGPAQTSR (93 aa)) form a tankyrase-binding region. Thr1518 carries the post-translational modification Phosphothreonine. Phosphoserine occurs at positions 1533, 1545, and 1558. Thr1563 is subject to Phosphothreonine. Residues 1575–1729 (ANLGRKRGHR…QALKLKKKKV (155 aa)) are disordered. Over residues 1577-1586 (LGRKRGHRAP) the composition is skewed to basic residues. Positions 1602–1615 (SDAHLFQDSTEPRA) are enriched in basic and acidic residues. A phosphoserine mark is found at Ser1620, Ser1621, and Ser1631. The Nuclear localization signal motif lies at 1629–1635 (PQSRRTR). Lys1644 is subject to N6-methyllysine. Phosphoserine is present on residues Ser1652, Ser1666, and Ser1715. Over residues 1665-1679 (RSAEEGELAESKSSQ) the composition is skewed to basic and acidic residues. A Nuclear localization signal motif is present at residues 1723 to 1729 (KLKKKKV).

As to quaternary structure, binds to the ANK repeat domain of TNKS1 and TNKS2. ADP-ribosylated by TNKS1 (in vitro). In terms of tissue distribution, detected in testis, ovary, lung, skeletal muscle, heart, prostate and pancreas, and at very low levels in brain and peripheral blood leukocytes.

It localises to the nucleus. The protein localises to the cytoplasm. The protein resides in the cytoskeleton. It is found in the chromosome. The polypeptide is 182 kDa tankyrase-1-binding protein (TNKS1BP1) (Homo sapiens (Human)).